A 63-amino-acid chain; its full sequence is Large ribosomal subunit protein uL29 (63 aa).

This sequence belongs to the universal ribosomal protein uL29 family.

The protein is Large ribosomal subunit protein uL29 of Chromohalobacter salexigens (strain ATCC BAA-138 / DSM 3043 / CIP 106854 / NCIMB 13768 / 1H11).